The chain runs to 260 residues: 4-hydroxy-tetrahydrodipicolinate reductase (260 aa).

12 to 17 is an NAD(+) binding site; it reads GFRGKM. Residue lysine 40 participates in NADP(+) binding. NAD(+)-binding positions include 92-94 and 118-121; these read GTT and APNF. The active-site Proton donor/acceptor is histidine 148. Histidine 149 lines the (S)-2,3,4,5-tetrahydrodipicolinate pocket. The active-site Proton donor is lysine 152. 158-159 provides a ligand contact to (S)-2,3,4,5-tetrahydrodipicolinate; sequence GT.

Belongs to the DapB family.

It localises to the cytoplasm. It catalyses the reaction (S)-2,3,4,5-tetrahydrodipicolinate + NAD(+) + H2O = (2S,4S)-4-hydroxy-2,3,4,5-tetrahydrodipicolinate + NADH + H(+). The catalysed reaction is (S)-2,3,4,5-tetrahydrodipicolinate + NADP(+) + H2O = (2S,4S)-4-hydroxy-2,3,4,5-tetrahydrodipicolinate + NADPH + H(+). Its pathway is amino-acid biosynthesis; L-lysine biosynthesis via DAP pathway; (S)-tetrahydrodipicolinate from L-aspartate: step 4/4. Catalyzes the conversion of 4-hydroxy-tetrahydrodipicolinate (HTPA) to tetrahydrodipicolinate. The chain is 4-hydroxy-tetrahydrodipicolinate reductase from Lactococcus lactis subsp. lactis (strain IL1403) (Streptococcus lactis).